We begin with the raw amino-acid sequence, 327 residues long: Cobalamin biosynthesis protein CobD (327 aa).

The next 4 membrane-spanning stretches (helical) occupy residues 63–83 (VGIL…ARLF), 84–104 (DVLG…FLAQ), 158–178 (FSDG…PGLL), and 305–325 (VFYA…LPLL).

This sequence belongs to the CobD/CbiB family.

It localises to the cell membrane. It functions in the pathway cofactor biosynthesis; adenosylcobalamin biosynthesis. Converts cobyric acid to cobinamide by the addition of aminopropanol on the F carboxylic group. The polypeptide is Cobalamin biosynthesis protein CobD (Rhizobium meliloti (strain 1021) (Ensifer meliloti)).